Reading from the N-terminus, the 20-residue chain is Agglutinin beta-2 chain isoform 1 (20 aa).

The span at 1–10 shows a compositional bias: polar residues; that stretch reads TQSTGTSQTI. Residues 1–20 form a disordered region; it reads TQSTGTSQTIAVGLWGGPDN.

The protein belongs to the jacalin lectin family. Tetramer of four alpha chains associated with two or four beta chains.

In terms of biological role, alpha-methyl-D-mannoside and D-mannose specific lectin. Binds IgA. This chain is Agglutinin beta-2 chain isoform 1, found in Morus nigra (Black mulberry).